We begin with the raw amino-acid sequence, 124 residues long: Fluoride-specific ion channel FluC (124 aa).

Helical transmembrane passes span Val-3–Leu-23, Ile-34–Ile-54, Leu-68–Phe-88, and Ala-100–Ile-120. Residues Gly-75 and Thr-78 each coordinate Na(+).

It belongs to the fluoride channel Fluc/FEX (TC 1.A.43) family.

It is found in the cell inner membrane. It carries out the reaction fluoride(in) = fluoride(out). Na(+) is not transported, but it plays an essential structural role and its presence is essential for fluoride channel function. Fluoride-specific ion channel. Important for reducing fluoride concentration in the cell, thus reducing its toxicity. The polypeptide is Fluoride-specific ion channel FluC (Coxiella burnetii (strain CbuK_Q154) (Coxiella burnetii (strain Q154))).